A 490-amino-acid chain; its full sequence is UDP-N-acetylmuramate--L-alanine ligase (490 aa).

Residue 122–128 (GTHGKTS) coordinates ATP.

The protein belongs to the MurCDEF family.

The protein resides in the cytoplasm. It carries out the reaction UDP-N-acetyl-alpha-D-muramate + L-alanine + ATP = UDP-N-acetyl-alpha-D-muramoyl-L-alanine + ADP + phosphate + H(+). It functions in the pathway cell wall biogenesis; peptidoglycan biosynthesis. Its function is as follows. Cell wall formation. The sequence is that of UDP-N-acetylmuramate--L-alanine ligase from Mycobacteroides abscessus (strain ATCC 19977 / DSM 44196 / CCUG 20993 / CIP 104536 / JCM 13569 / NCTC 13031 / TMC 1543 / L948) (Mycobacterium abscessus).